The chain runs to 64 residues: MEHWGEPIPGTGQSWRQPLSTSGRGWLGSAPWRWLGPTSWRWLGSAPWWWLGTATWWWRLGSRW.

The tract at residues 1–22 is disordered; that stretch reads MEHWGEPIPGTGQSWRQPLSTS. A compositionally biased stretch (polar residues) spans 11-22; sequence TGQSWRQPLSTS. The helical transmembrane segment at 40–58 threads the bilayer; sequence WRWLGSAPWWWLGTATWWW.

Its subcellular location is the mitochondrion outer membrane. The protein is Alternative prion protein of Ovis aries (Sheep).